A 623-amino-acid polypeptide reads, in one-letter code: Protein FAM234B (623 aa).

The tract at residues 1–82 is disordered; the sequence is MATVLSRALK…TSERAPEGYP (82 aa). The chain crosses the membrane as a helical span at residues 104 to 124; it reads AVFLLTVVISMILVLVCAFLI.

It belongs to the FAM234 family.

It localises to the membrane. The protein resides in the golgi outpost. Its subcellular location is the cytoplasm. It is found in the cytoskeleton. The protein localises to the microtubule organizing center. The sequence is that of Protein FAM234B (FAM234B) from Gallus gallus (Chicken).